We begin with the raw amino-acid sequence, 897 residues long: Transportin-2 (897 aa).

HEAT repeat units lie at residues 9–36 (GLQQ…DKLK), 41–79 (FPDF…AHYQ), 88–121 (FIKQ…KGEL), 127–164 (LLPQ…LDSD), 171–201 (NIMI…QFIM), 214–241 (FIEH…VMLL), 253–280 (HSII…FWLT), 296–386 (VQLI…LANV), 394–422 (HLLP…GAIA), 434–461 (PELI…TLSR), 475–508 (LKPL…EEEA), 516–549 (LSYI…ADSV), 557–595 (EYIQ…TALQ), 603–654 (EPVY…GLGG), 665–696 (IMTL…KACF), 704–737 (AEFM…MQMG), 745–790 (QMVL…YVCP), 798–831 (QQFI…IGVN), 840–871 (IFFC…KDQV), and 874–894 (DNWQ…LAAF). An Importin N-terminal domain is found at 31-99 (VQDKLKQLNQ…KQECLNNIGD (69 aa)). Positions 325 to 364 (AVPDSEQDIKPRFHKSRTVTLPHEAERPDGSEDAEDDDDD) are disordered. The span at 355–364 (SEDAEDDDDD) shows a compositional bias: acidic residues. K862 carries the N6-acetyllysine modification.

Belongs to the importin beta family. Importin beta-2 subfamily.

It is found in the cytoplasm. It localises to the nucleus. Probably functions in nuclear protein import as nuclear transport receptor. Serves as receptor for nuclear localization signals (NLS) in cargo substrates. Is thought to mediate docking of the importin/substrate complex to the nuclear pore complex (NPC) through binding to nucleoporin and the complex is subsequently translocated through the pore by an energy requiring, Ran-dependent mechanism. At the nucleoplasmic side of the NPC, Ran binds to the importin, the importin/substrate complex dissociates and importin is re-exported from the nucleus to the cytoplasm where GTP hydrolysis releases Ran. The directionality of nuclear import is thought to be conferred by an asymmetric distribution of the GTP- and GDP-bound forms of Ran between the cytoplasm and nucleus. This Homo sapiens (Human) protein is Transportin-2 (TNPO2).